Consider the following 209-residue polypeptide: MITIALPKGRLAQQTVELLKRASLVDIDISEESRKLIIEDTQNSLRFLMVKPFDVPTYVEYGVADVGVVGKDVLLEMNKRVYELLDLKIGKCFVALAGPKGISEALLKKPDKTIATKFPNIAKEYFENVRGEDVKIIKLNGSVELAPILGLSDMIVDIVESGRTLKENGLEVYEKLYDISARLIANRASLKLKTQIDDIINRLERMIEE.

This sequence belongs to the ATP phosphoribosyltransferase family. Short subfamily. In terms of assembly, heteromultimer composed of HisG and HisZ subunits.

Its subcellular location is the cytoplasm. The catalysed reaction is 1-(5-phospho-beta-D-ribosyl)-ATP + diphosphate = 5-phospho-alpha-D-ribose 1-diphosphate + ATP. Its pathway is amino-acid biosynthesis; L-histidine biosynthesis; L-histidine from 5-phospho-alpha-D-ribose 1-diphosphate: step 1/9. Catalyzes the condensation of ATP and 5-phosphoribose 1-diphosphate to form N'-(5'-phosphoribosyl)-ATP (PR-ATP). Has a crucial role in the pathway because the rate of histidine biosynthesis seems to be controlled primarily by regulation of HisG enzymatic activity. This chain is ATP phosphoribosyltransferase, found in Caldicellulosiruptor bescii (strain ATCC BAA-1888 / DSM 6725 / KCTC 15123 / Z-1320) (Anaerocellum thermophilum).